The chain runs to 248 residues: DNA repair protein RecO (248 aa).

This sequence belongs to the RecO family.

Functionally, involved in DNA repair and RecF pathway recombination. This Chelativorans sp. (strain BNC1) protein is DNA repair protein RecO.